The following is a 333-amino-acid chain: Glyceraldehyde-3-phosphate dehydrogenase (333 aa).

NAD(+) contacts are provided by residues Arg11–Ile12, Asp33, Arg78, and Ser120. D-glyceraldehyde 3-phosphate-binding positions include Ser149–Thr151, Thr180, Thr209–Gly210, and Arg232. Cys150 serves as the catalytic Nucleophile. Position 150 is an S-nitrosocysteine (Cys150). Asn314 contributes to the NAD(+) binding site.

Belongs to the glyceraldehyde-3-phosphate dehydrogenase family. As to quaternary structure, homotetramer. S-nitrosylation of Cys-150 leads to translocation to the nucleus.

Its subcellular location is the cytoplasm. The protein localises to the cytosol. The protein resides in the cytoskeleton. It localises to the nucleus. It carries out the reaction D-glyceraldehyde 3-phosphate + phosphate + NAD(+) = (2R)-3-phospho-glyceroyl phosphate + NADH + H(+). The catalysed reaction is S-nitroso-L-cysteinyl-[GAPDH] + L-cysteinyl-[protein] = L-cysteinyl-[GAPDH] + S-nitroso-L-cysteinyl-[protein]. It participates in carbohydrate degradation; glycolysis; pyruvate from D-glyceraldehyde 3-phosphate: step 1/5. Has both glyceraldehyde-3-phosphate dehydrogenase and nitrosylase activities, thereby playing a role in glycolysis and nuclear functions, respectively. Glyceraldehyde-3-phosphate dehydrogenase is a key enzyme in glycolysis that catalyzes the first step of the pathway by converting D-glyceraldehyde 3-phosphate (G3P) into 3-phospho-D-glyceroyl phosphate. Participates in nuclear events including transcription, RNA transport, DNA replication and apoptosis. Nuclear functions are probably due to the nitrosylase activity that mediates cysteine S-nitrosylation of nuclear target proteins such as SIRT1, HDAC2 and PRKDC. The polypeptide is Glyceraldehyde-3-phosphate dehydrogenase (Danio rerio (Zebrafish)).